The primary structure comprises 156 residues: Ribosome maturation factor RimP (156 aa).

It belongs to the RimP family.

The protein localises to the cytoplasm. Its function is as follows. Required for maturation of 30S ribosomal subunits. The sequence is that of Ribosome maturation factor RimP from Oceanobacillus iheyensis (strain DSM 14371 / CIP 107618 / JCM 11309 / KCTC 3954 / HTE831).